A 359-amino-acid chain; its full sequence is tRNA-specific 2-thiouridylase MnmA (359 aa).

ATP-binding positions include Gly-10–Ser-17 and Leu-36. The active-site Nucleophile is Cys-101. The cysteines at positions 101 and 197 are disulfide-linked. An ATP-binding site is contributed by Gly-125. The interval Lys-147–Gln-149 is interaction with tRNA. The active-site Cysteine persulfide intermediate is the Cys-197. Residues Arg-306–Tyr-307 are interaction with tRNA.

It belongs to the MnmA/TRMU family.

It localises to the cytoplasm. The catalysed reaction is S-sulfanyl-L-cysteinyl-[protein] + uridine(34) in tRNA + AH2 + ATP = 2-thiouridine(34) in tRNA + L-cysteinyl-[protein] + A + AMP + diphosphate + H(+). In terms of biological role, catalyzes the 2-thiolation of uridine at the wobble position (U34) of tRNA, leading to the formation of s(2)U34. The sequence is that of tRNA-specific 2-thiouridylase MnmA from Chlorobium chlorochromatii (strain CaD3).